Here is a 404-residue protein sequence, read N- to C-terminus: Acetylornithine/succinyldiaminopimelate aminotransferase (404 aa).

Pyridoxal 5'-phosphate is bound by residues 108–109 (GA) and Phe141. Arg144 contributes to the N(2)-acetyl-L-ornithine binding site. 226–229 (DEIQ) is a binding site for pyridoxal 5'-phosphate. Lys255 carries the post-translational modification N6-(pyridoxal phosphate)lysine. Residue Thr283 participates in N(2)-acetyl-L-ornithine binding. Thr284 contacts pyridoxal 5'-phosphate.

Belongs to the class-III pyridoxal-phosphate-dependent aminotransferase family. ArgD subfamily. In terms of assembly, homodimer. Pyridoxal 5'-phosphate is required as a cofactor.

Its subcellular location is the cytoplasm. The catalysed reaction is N(2)-acetyl-L-ornithine + 2-oxoglutarate = N-acetyl-L-glutamate 5-semialdehyde + L-glutamate. The enzyme catalyses N-succinyl-(2S,6S)-2,6-diaminopimelate + 2-oxoglutarate = (S)-2-succinylamino-6-oxoheptanedioate + L-glutamate. It participates in amino-acid biosynthesis; L-arginine biosynthesis; N(2)-acetyl-L-ornithine from L-glutamate: step 4/4. Its pathway is amino-acid biosynthesis; L-lysine biosynthesis via DAP pathway; LL-2,6-diaminopimelate from (S)-tetrahydrodipicolinate (succinylase route): step 2/3. Functionally, involved in both the arginine and lysine biosynthetic pathways. The protein is Acetylornithine/succinyldiaminopimelate aminotransferase of Buchnera aphidicola subsp. Schizaphis graminum (strain Sg).